Consider the following 1023-residue polypeptide: Solute carrier family 12 member 3 (1023 aa).

Residues Met-1 to Gly-134 lie on the Cytoplasmic side of the membrane. The disordered stretch occupies residues Asp-91–Pro-131. A discontinuously helical transmembrane segment spans residues Trp-135–Gly-164. Na(+) contacts are provided by Leu-145 and Trp-148. A helical membrane pass occupies residues Ile-165–Thr-186. Residues Ser-187 to Gly-217 are Cytoplasmic-facing. Residues Leu-218–Thr-240 traverse the membrane as a helical segment. Residues Asp-241 to Asp-252 are Extracellular-facing. 2 helical membrane-spanning segments follow: residues Pro-253–Glu-277 and Trp-278–Gly-300. Residues Thr-301–Gly-335 are Extracellular-facing. A discontinuously helical transmembrane segment spans residues Ser-336–Ile-357. Residues Gly-350, Ile-351, and Leu-352 each coordinate chloride. At Ser-358–Ile-368 the chain is on the cytoplasmic side. Residues Pro-369–Ile-390 traverse the membrane as a helical segment. Residues Gly-391 to Phe-452 lie on the Extracellular side of the membrane. N-linked (GlcNAc...) asparagine glycans are attached at residues Asn-403 and Asn-414. Cystine bridges form between Cys-415/Cys-420 and Cys-429/Cys-435. Asn-432 is a glycosylation site (N-linked (GlcNAc...) asparagine). Residues Ala-453–Pro-476 form a helical membrane-spanning segment. Residues Ala-463, Ser-466, and Ser-467 each coordinate Na(+). Residues Lys-477–Arg-506 are Cytoplasmic-facing. Residues Ala-507–Ile-521 traverse the membrane as a helical segment. Residues Ala-522–Thr-526 are Extracellular-facing. Residues Ile-527 to Asn-543 form a helical membrane-spanning segment. Tyr-539 provides a ligand contact to chloride. At Phe-544 to Lys-566 the chain is on the cytoplasmic side. 2 helical membrane passes run Trp-567–Trp-586 and Ala-587–Leu-598. The Cytoplasmic segment spans residues Leu-599–Gln-1023. Positions Ser-614–Gly-629 are scissor helix. ATP-binding residues include Leu-647, Arg-654, Val-676, Gly-733, and Leu-772.

This sequence belongs to the SLC12A transporter family. Homodimer; adopts a domain-swap conformation at the scissor helices connecting the transmembrane domain and C-terminal domain. Expressed in urinary bladder, intestine, ovary, skeletal muscle, eye, brain, and kidney.

The protein localises to the cell membrane. The enzyme catalyses chloride(out) + Na(+)(out) = chloride(in) + Na(+)(in). Inhibited by thiazide-type diuretics including polythiazide, metolazone, cyclothiazide, hydrochlorothiazide and chlorthalidone. Thiazide drugs, specifically inhibit SLC12A3/NCC transporter activity by competing with chloride for binding. Electroneutral sodium and chloride ion cotransporter, with a coupling ratio 1 Na(+):1 Cl(-). Mediates sodium and chloride reabsorption. This is Solute carrier family 12 member 3 (slc12a3) from Pseudopleuronectes americanus (Winter flounder).